Reading from the N-terminus, the 129-residue chain is 8-oxo-dGTP diphosphatase (129 aa).

The Nudix hydrolase domain occupies 1–129 (MKKLQIAVGI…EPVIAKLKRL (129 aa)). Residues R23, H28, and 34–37 (EFPG) contribute to the 8-oxo-dGTP site. Mg(2+)-binding residues include G37 and E57. Residues 38 to 59 (GKIEMGETPEQAVVRELQEEVG) carry the Nudix box motif. N119 contributes to the 8-oxo-dGTP binding site.

Belongs to the Nudix hydrolase family. As to quaternary structure, monomer. Mg(2+) is required as a cofactor.

It carries out the reaction 8-oxo-dGTP + H2O = 8-oxo-dGMP + diphosphate + H(+). It catalyses the reaction 8-oxo-GTP + H2O = 8-oxo-GMP + diphosphate + H(+). The enzyme catalyses 8-oxo-dGDP + H2O = 8-oxo-dGMP + phosphate + H(+). The catalysed reaction is 8-oxo-GDP + H2O = 8-oxo-GMP + phosphate + H(+). In terms of biological role, specifically hydrolyzes both 8-oxo-deoxyguanosine triphosphate (8-oxo-dGTP) and 8-oxo-guanosine triphosphate (8-oxo-GTP) to the related monophosphates, thereby cleaning up the nucleotide pools and preventing misincorporation of 8-oxoGua into DNA and RNA. It prevents replicational errors by removing an oxidatively damaged form of guanine (8-oxo-dGTP) from DNA and the nucleotide pool. 8-oxo-dGTP can be inserted opposite dA and dC residues of template DNA with almost equal efficiency thus leading to A.T to G.C transversions. MutT may also ensure transcriptional fidelity, removing 8-oxo-GTP from the ribonucleotide triphosphate pool. However, due to the lower efficiency of RNA polymerase 8-oxo-GTP incorporation, MutT is probably not a major contributor to transcriptional fidelity. It also hydrolyzes 8-oxo-dGDP and 8-oxo-GDP to their monophosphate form. In vitro, can also use dGTP, dGDP and other various nucleoside di- and triphosphates, with much lower efficiency. Works cooperatively with MutM and MutY to prevent accumulation in the DNA of oxidized guanine residues. In Escherichia coli (strain K12), this protein is 8-oxo-dGTP diphosphatase.